The following is a 278-amino-acid chain: Large ribosomal subunit protein uL2 (278 aa).

The segment at 208 to 278 (AGRSRWMGKR…LIIRHRKGRK (71 aa)) is disordered. Positions 209–219 (GRSRWMGKRPQ) are enriched in basic residues. Positions 258 to 270 (KTRDSKKASEKLI) are enriched in basic and acidic residues.

It belongs to the universal ribosomal protein uL2 family. In terms of assembly, part of the 50S ribosomal subunit. Forms a bridge to the 30S subunit in the 70S ribosome.

One of the primary rRNA binding proteins. Required for association of the 30S and 50S subunits to form the 70S ribosome, for tRNA binding and peptide bond formation. It has been suggested to have peptidyltransferase activity; this is somewhat controversial. Makes several contacts with the 16S rRNA in the 70S ribosome. The protein is Large ribosomal subunit protein uL2 of Lactobacillus delbrueckii subsp. bulgaricus (strain ATCC 11842 / DSM 20081 / BCRC 10696 / JCM 1002 / NBRC 13953 / NCIMB 11778 / NCTC 12712 / WDCM 00102 / Lb 14).